The chain runs to 283 residues: Putative pyruvate, phosphate dikinase regulatory protein (283 aa).

An ADP-binding site is contributed by 154-161 (GVSRTSKT).

This sequence belongs to the pyruvate, phosphate/water dikinase regulatory protein family. PDRP subfamily.

The enzyme catalyses N(tele)-phospho-L-histidyl/L-threonyl-[pyruvate, phosphate dikinase] + ADP = N(tele)-phospho-L-histidyl/O-phospho-L-threonyl-[pyruvate, phosphate dikinase] + AMP + H(+). The catalysed reaction is N(tele)-phospho-L-histidyl/O-phospho-L-threonyl-[pyruvate, phosphate dikinase] + phosphate + H(+) = N(tele)-phospho-L-histidyl/L-threonyl-[pyruvate, phosphate dikinase] + diphosphate. In terms of biological role, bifunctional serine/threonine kinase and phosphorylase involved in the regulation of the pyruvate, phosphate dikinase (PPDK) by catalyzing its phosphorylation/dephosphorylation. The polypeptide is Putative pyruvate, phosphate dikinase regulatory protein (Afipia carboxidovorans (strain ATCC 49405 / DSM 1227 / KCTC 32145 / OM5) (Oligotropha carboxidovorans)).